We begin with the raw amino-acid sequence, 232 residues long: (S)-2-haloacid dehalogenase (232 aa).

The active-site Nucleophile is the aspartate 10. An (S)-2-haloacid-binding positions include 11–12 (LY), arginine 41, and 118–119 (SN). An important for catalytic activity region spans residues 175 to 180 (SSNAWD).

This sequence belongs to the HAD-like hydrolase superfamily. S-2-haloalkanoic acid dehalogenase family. In terms of assembly, homodimer.

It carries out the reaction an (S)-2-haloacid + H2O = a (2R)-2-hydroxycarboxylate + a halide anion + H(+). The catalysed reaction is (S)-2-chloropropanoate + H2O = (R)-lactate + chloride + H(+). Catalyzes the hydrolytic dehalogenation of small (S)-2-haloalkanoic acids to yield the corresponding (R)-2-hydroxyalkanoic acids. Acts on acids of short chain lengths, C(2) to C(4), with inversion of configuration at C-2. Active with 2-halogenated carboxylic acids and converts only the S-isomer (or L-isomer) of 2-chloropropionic acid with inversion of configuration to produce R-lactate (or D-isomer). The protein is (S)-2-haloacid dehalogenase of Pseudomonas sp. (strain YL).